We begin with the raw amino-acid sequence, 345 residues long: Phosphoribosylformylglycinamidine cyclo-ligase (345 aa).

It belongs to the AIR synthase family.

The protein resides in the cytoplasm. The catalysed reaction is 2-formamido-N(1)-(5-O-phospho-beta-D-ribosyl)acetamidine + ATP = 5-amino-1-(5-phospho-beta-D-ribosyl)imidazole + ADP + phosphate + H(+). It participates in purine metabolism; IMP biosynthesis via de novo pathway; 5-amino-1-(5-phospho-D-ribosyl)imidazole from N(2)-formyl-N(1)-(5-phospho-D-ribosyl)glycinamide: step 2/2. The sequence is that of Phosphoribosylformylglycinamidine cyclo-ligase from Escherichia coli (strain 55989 / EAEC).